Here is a 265-residue protein sequence, read N- to C-terminus: Tryptophan synthase alpha chain (265 aa).

Active-site proton acceptor residues include Glu-45 and Asp-56.

Belongs to the TrpA family. In terms of assembly, tetramer of two alpha and two beta chains.

The catalysed reaction is (1S,2R)-1-C-(indol-3-yl)glycerol 3-phosphate + L-serine = D-glyceraldehyde 3-phosphate + L-tryptophan + H2O. The protein operates within amino-acid biosynthesis; L-tryptophan biosynthesis; L-tryptophan from chorismate: step 5/5. Its function is as follows. The alpha subunit is responsible for the aldol cleavage of indoleglycerol phosphate to indole and glyceraldehyde 3-phosphate. The polypeptide is Tryptophan synthase alpha chain (Halalkalibacterium halodurans (strain ATCC BAA-125 / DSM 18197 / FERM 7344 / JCM 9153 / C-125) (Bacillus halodurans)).